The primary structure comprises 272 residues: MTDMYSLFVAFILGVVEGLTEFLPVSSTGHMIIVGELLGFTGDKAKTFEVIIQLGSILAVVVVFWRRLFGLIGIHFGAVPHEGKTNGHLTLGHILLAMIPAVILGLAFHDVIKALFDPKSVMYALVAGGVLLLAAEWLKPKNPKAVGLDDITYRQAFAIGCFQCLALWPGFSRSGATISGGMLVGVNRYAASEFSFILAVPMMIGASGLDLYKSLHFLTLGDLPMFAVGFITAFIVALIAIKTFLSLIKRISFVPFAIYRFIVAAVVYWVFM.

The next 8 membrane-spanning stretches (helical) occupy residues tyrosine 5–valine 25, alanine 45–tryptophan 65, histidine 88–phenylalanine 108, alanine 114–alanine 134, tyrosine 153–serine 172, tyrosine 189–leucine 209, glycine 221–isoleucine 241, and isoleucine 251–phenylalanine 271.

This sequence belongs to the UppP family.

The protein localises to the cell inner membrane. It catalyses the reaction di-trans,octa-cis-undecaprenyl diphosphate + H2O = di-trans,octa-cis-undecaprenyl phosphate + phosphate + H(+). Functionally, catalyzes the dephosphorylation of undecaprenyl diphosphate (UPP). Confers resistance to bacitracin. This is Undecaprenyl-diphosphatase from Yersinia pseudotuberculosis serotype IB (strain PB1/+).